The sequence spans 343 residues: Histone H1.8 (343 aa).

Low complexity predominate over residues 1–32 (MAPGSIASSDTSSSTSSSSTSSASSASAEGSS). Disordered stretches follow at residues 1 to 50 (MAPG…VRAP) and 122 to 343 (ATGS…EAEG). The region spanning 52-130 (RHPPVLRMVL…GATGSFKLVP (79 aa)) is the H15 domain. The span at 132 to 142 (DKRKIPPRKTA) shows a compositional bias: basic residues. Composition is skewed to basic and acidic residues over residues 150–183 (EGKDPKKPSESKKDPANTVEVKKGSRKPREERAA), 199–219 (QTKDPEPRLGEAKKSSRRPDK), and 235–247 (KVKERGSRQADTK). Positions 161 to 176 (KKDPANTVEVKKGSRK) match the Nuclear localization signal motif. Polar residues predominate over residues 253 to 265 (QPGSQSSKSTVTK).

The protein belongs to the histone H1/H5 family. In terms of tissue distribution, oocyte (at protein level).

The protein resides in the cytoplasm. It is found in the nucleus. Its subcellular location is the chromosome. Its function is as follows. May play a key role in the control of gene expression during oogenesis and early embryogenesis, presumably through the perturbation of chromatin structure. Essential for meiotic maturation of germinal vesicle-stage oocytes. The somatic type linker histone H1c is rapidly replaced by H1oo in a donor nucleus transplanted into an oocyte. The greater mobility of H1oo as compared to H1c may contribute to this rapid replacement and increased instability of the embryonic chromatin structure. The rapid replacement of H1c with H1oo may play an important role in nuclear remodeling. The polypeptide is Histone H1.8 (Bos taurus (Bovine)).